The following is a 354-amino-acid chain: UDP-3-O-acylglucosamine N-acyltransferase (354 aa).

His-247 functions as the Proton acceptor in the catalytic mechanism.

It belongs to the transferase hexapeptide repeat family. LpxD subfamily. As to quaternary structure, homotrimer.

It catalyses the reaction a UDP-3-O-[(3R)-3-hydroxyacyl]-alpha-D-glucosamine + a (3R)-hydroxyacyl-[ACP] = a UDP-2-N,3-O-bis[(3R)-3-hydroxyacyl]-alpha-D-glucosamine + holo-[ACP] + H(+). Its pathway is bacterial outer membrane biogenesis; LPS lipid A biosynthesis. Catalyzes the N-acylation of UDP-3-O-acylglucosamine using 3-hydroxyacyl-ACP as the acyl donor. Is involved in the biosynthesis of lipid A, a phosphorylated glycolipid that anchors the lipopolysaccharide to the outer membrane of the cell. This chain is UDP-3-O-acylglucosamine N-acyltransferase, found in Chlamydia trachomatis serovar L2b (strain UCH-1/proctitis).